Consider the following 212-residue polypeptide: ATP phosphoribosyltransferase (212 aa).

Belongs to the ATP phosphoribosyltransferase family. Short subfamily. Heteromultimer composed of HisG and HisZ subunits.

It localises to the cytoplasm. The catalysed reaction is 1-(5-phospho-beta-D-ribosyl)-ATP + diphosphate = 5-phospho-alpha-D-ribose 1-diphosphate + ATP. It functions in the pathway amino-acid biosynthesis; L-histidine biosynthesis; L-histidine from 5-phospho-alpha-D-ribose 1-diphosphate: step 1/9. Functionally, catalyzes the condensation of ATP and 5-phosphoribose 1-diphosphate to form N'-(5'-phosphoribosyl)-ATP (PR-ATP). Has a crucial role in the pathway because the rate of histidine biosynthesis seems to be controlled primarily by regulation of HisG enzymatic activity. This is ATP phosphoribosyltransferase from Prochlorococcus marinus (strain MIT 9301).